The following is a 267-amino-acid chain: MRPRLQNFNALRARSYLTRLPLFTRLIVLAIIALSIASLQSVWNLREWGALIPEEISITNAYRLSTFPLIHLNVIHAILNLLALTPLMERFETEHGTLTSLALFFGPLTSIPAVAYVLIERCIFRANHGVLGASMWVFTLLAMESIQTYKSNPHFVIGSVNIPTWTTPLIMSLVVAALIPGTSLLGHLCGIAIGYVAGFGYAKLLAPPEWGLRWVENRLNLLKILPHYVSIDKTTYGRFGVLPTTNRPGPSGSAATELVGTTQRLGP.

The next 6 helical transmembrane spans lie at 20-40 (LPLF…ASLQ), 67-87 (FPLI…LTPL), 99-119 (TSLA…YVLI), 126-146 (ANHG…MESI), 155-179 (FVIG…AALI), and 185-206 (LGHL…KLLA). The active-site Nucleophile is S134. Residue H187 is part of the active site. The tract at residues 247–267 (RPGPSGSAATELVGTTQRLGP) is disordered.

This sequence belongs to the peptidase S54 family.

The protein localises to the golgi apparatus membrane. The protein resides in the golgi apparatus. It is found in the cis-Golgi network membrane. The enzyme catalyses Cleaves type-1 transmembrane domains using a catalytic dyad composed of serine and histidine that are contributed by different transmembrane domains.. Functionally, probable rhomboid-type serine protease that catalyzes intramembrane proteolysis. The protein is Rhomboid-type serine protease 2 (RBD2) of Gibberella zeae (strain ATCC MYA-4620 / CBS 123657 / FGSC 9075 / NRRL 31084 / PH-1) (Wheat head blight fungus).